A 148-amino-acid chain; its full sequence is Large ribosomal subunit protein uL13 (148 aa).

Belongs to the universal ribosomal protein uL13 family. In terms of assembly, part of the 50S ribosomal subunit.

Its function is as follows. This protein is one of the early assembly proteins of the 50S ribosomal subunit, although it is not seen to bind rRNA by itself. It is important during the early stages of 50S assembly. The polypeptide is Large ribosomal subunit protein uL13 (Ureaplasma parvum serovar 3 (strain ATCC 27815 / 27 / NCTC 11736)).